We begin with the raw amino-acid sequence, 64 residues long: MPKMKTNRGAAKRFKLKKNAIKRGSAFKNHILTKKSHQRKANLNAPKYVHSTNVDSVKSLLCMA.

Belongs to the bacterial ribosomal protein bL35 family.

This Helicobacter hepaticus (strain ATCC 51449 / 3B1) protein is Large ribosomal subunit protein bL35.